The following is a 420-amino-acid chain: Lactosylceramide alpha-2,3-sialyltransferase (420 aa).

Positions 1–39 are disordered; that stretch reads MRKKAAGGAERRPLKPRTEAAAAAPAGRAMPSDHSRMKL. Topologically, residues 1 to 67 are cytoplasmic; sequence MRKKAAGGAE…MRRPNLLLKD (67 aa). The span at 9-18 shows a compositional bias: basic and acidic residues; that stretch reads AERRPLKPRT. A compositionally biased stretch (low complexity) spans 20 to 29; the sequence is AAAAAPAGRA. A helical transmembrane segment spans residues 68–88; it reads ILKCTLLLFGVWILFYILKLN. Residues 89–420 lie on the Lumenal side of the membrane; that stretch reads HTTEECDMKR…DLSGGIHSEF (332 aa). A disulfide bond links cysteine 197 and cysteine 355. Asparagine 238 is a glycosylation site (N-linked (GlcNAc...) asparagine).

The protein belongs to the glycosyltransferase 29 family.

The protein localises to the golgi apparatus membrane. It catalyses the reaction a beta-D-Gal-(1-&gt;4)-beta-D-Glc-(1&lt;-&gt;1)-Cer(d18:1(4E)) + CMP-N-acetyl-beta-neuraminate = a ganglioside GM3 (d18:1(4E)) + CMP + H(+). It carries out the reaction ganglioside GA2 (d18:1(4E)/18:0) + CMP-N-acetyl-beta-neuraminate = ganglioside GM2 (d18:1(4E)/18:0) + CMP + H(+). The enzyme catalyses a beta-D-Gal-(1&lt;-&gt;1')-ceramide + CMP-N-acetyl-beta-neuraminate = N-acetyl-alpha-neuraminosyl-(2-&gt;3)-beta-D-galactosyl-(1&lt;-&gt;1')-ceramide + CMP + H(+). The catalysed reaction is ganglioside GA1 (d18:1(4E)/18:0) + CMP-N-acetyl-beta-neuraminate = ganglioside GM1 (d18:1(4E)/18:0) + CMP + H(+). Its function is as follows. Transfers the sialyl group (N-acetyl-alpha-neuraminyl or NeuAc) from CMP-NeuAc to the non-reducing terminal galactose (Gal) of glycosphingolipids forming gangliosides (important molecules involved in the regulation of multiple cellular processes, including cell proliferation and differentiation, apoptosis, embryogenesis, development, and oncogenesis). Mainly involved in the biosynthesis of ganglioside GM3 but can also use different glycolipids as substrate acceptors such as D-galactosylceramide (GalCer), asialo-GM2 (GA2) and asialo-GM1 (GA1), although less preferentially than beta-D-Gal-(1-&gt;4)-beta-D-Glc-(1&lt;-&gt;1)-Cer (LacCer). This Bos taurus (Bovine) protein is Lactosylceramide alpha-2,3-sialyltransferase (ST3GAL5).